Reading from the N-terminus, the 375-residue chain is Cobalt-precorrin-5B C(1)-methyltransferase (375 aa).

Belongs to the CbiD family.

It carries out the reaction Co-precorrin-5B + S-adenosyl-L-methionine = Co-precorrin-6A + S-adenosyl-L-homocysteine. It participates in cofactor biosynthesis; adenosylcobalamin biosynthesis; cob(II)yrinate a,c-diamide from sirohydrochlorin (anaerobic route): step 6/10. Its function is as follows. Catalyzes the methylation of C-1 in cobalt-precorrin-5B to form cobalt-precorrin-6A. This is Cobalt-precorrin-5B C(1)-methyltransferase from Paracidovorax citrulli (strain AAC00-1) (Acidovorax citrulli).